A 719-amino-acid polypeptide reads, in one-letter code: Phosphoribosylformylglycinamidine synthase subunit PurL (719 aa).

His-47 is a catalytic residue. ATP is bound by residues Tyr-50 and Lys-89. Glu-91 lines the Mg(2+) pocket. Substrate is bound by residues 92 to 95 and Arg-114; that span reads SHNH. His-93 serves as the catalytic Proton acceptor. Asp-115 contributes to the Mg(2+) binding site. Gln-238 contacts substrate. Residue Asp-266 participates in Mg(2+) binding. 310 to 312 contributes to the substrate binding site; the sequence is ESQ. Residues Asp-488 and Gly-525 each contribute to the ATP site. Asn-526 is a Mg(2+) binding site. Residue Ser-528 coordinates substrate.

The protein belongs to the FGAMS family. Monomer. Part of the FGAM synthase complex composed of 1 PurL, 1 PurQ and 2 PurS subunits.

It localises to the cytoplasm. The enzyme catalyses N(2)-formyl-N(1)-(5-phospho-beta-D-ribosyl)glycinamide + L-glutamine + ATP + H2O = 2-formamido-N(1)-(5-O-phospho-beta-D-ribosyl)acetamidine + L-glutamate + ADP + phosphate + H(+). Its pathway is purine metabolism; IMP biosynthesis via de novo pathway; 5-amino-1-(5-phospho-D-ribosyl)imidazole from N(2)-formyl-N(1)-(5-phospho-D-ribosyl)glycinamide: step 1/2. Part of the phosphoribosylformylglycinamidine synthase complex involved in the purines biosynthetic pathway. Catalyzes the ATP-dependent conversion of formylglycinamide ribonucleotide (FGAR) and glutamine to yield formylglycinamidine ribonucleotide (FGAM) and glutamate. The FGAM synthase complex is composed of three subunits. PurQ produces an ammonia molecule by converting glutamine to glutamate. PurL transfers the ammonia molecule to FGAR to form FGAM in an ATP-dependent manner. PurS interacts with PurQ and PurL and is thought to assist in the transfer of the ammonia molecule from PurQ to PurL. The protein is Phosphoribosylformylglycinamidine synthase subunit PurL of Roseobacter denitrificans (strain ATCC 33942 / OCh 114) (Erythrobacter sp. (strain OCh 114)).